Reading from the N-terminus, the 184-residue chain is Thymidine kinase (184 aa).

ATP-binding positions include 9–16 (AAMNSGKS) and 82–85 (DEAQ). Glu83 (proton acceptor) is an active-site residue. Cys140, Cys142, Cys177, and Cys180 together coordinate Zn(2+).

This sequence belongs to the thymidine kinase family. As to quaternary structure, homotetramer.

It is found in the cytoplasm. It carries out the reaction thymidine + ATP = dTMP + ADP + H(+). This Chromobacterium violaceum (strain ATCC 12472 / DSM 30191 / JCM 1249 / CCUG 213 / NBRC 12614 / NCIMB 9131 / NCTC 9757 / MK) protein is Thymidine kinase.